The primary structure comprises 663 residues: DNA ligase (663 aa).

NAD(+) contacts are provided by residues 33–37, 82–83, and Glu-112; these read DYSYD and SI. Lys-114 (N6-AMP-lysine intermediate) is an active-site residue. Residues Arg-135, Glu-171, Lys-285, and Lys-309 each contribute to the NAD(+) site. Positions 403, 406, 419, and 424 each coordinate Zn(2+). Positions 581-663 constitute a BRCT domain; that stretch reads DKEAPLQGKV…SRILDAKSVS (83 aa).

Belongs to the NAD-dependent DNA ligase family. LigA subfamily. Mg(2+) serves as cofactor. Requires Mn(2+) as cofactor.

It catalyses the reaction NAD(+) + (deoxyribonucleotide)n-3'-hydroxyl + 5'-phospho-(deoxyribonucleotide)m = (deoxyribonucleotide)n+m + AMP + beta-nicotinamide D-nucleotide.. Functionally, DNA ligase that catalyzes the formation of phosphodiester linkages between 5'-phosphoryl and 3'-hydroxyl groups in double-stranded DNA using NAD as a coenzyme and as the energy source for the reaction. It is essential for DNA replication and repair of damaged DNA. This Chlamydia trachomatis serovar L2 (strain ATCC VR-902B / DSM 19102 / 434/Bu) protein is DNA ligase.